The following is an 89-amino-acid chain: Small ribosomal subunit protein uS15 (89 aa).

The segment at 1-23 (MSLGTEEKQNLINTHQVHPTDTG) is disordered. The segment covering 10-23 (NLINTHQVHPTDTG) has biased composition (polar residues).

The protein belongs to the universal ribosomal protein uS15 family. In terms of assembly, part of the 30S ribosomal subunit. Forms a bridge to the 50S subunit in the 70S ribosome, contacting the 23S rRNA.

Its function is as follows. One of the primary rRNA binding proteins, it binds directly to 16S rRNA where it helps nucleate assembly of the platform of the 30S subunit by binding and bridging several RNA helices of the 16S rRNA. In terms of biological role, forms an intersubunit bridge (bridge B4) with the 23S rRNA of the 50S subunit in the ribosome. The polypeptide is Small ribosomal subunit protein uS15 (Prochlorococcus marinus (strain NATL2A)).